A 420-amino-acid polypeptide reads, in one-letter code: Cell division protein FtsA (420 aa).

Belongs to the FtsA/MreB family. As to quaternary structure, self-interacts. Interacts with FtsZ.

Its subcellular location is the cell inner membrane. Cell division protein that is involved in the assembly of the Z ring. May serve as a membrane anchor for the Z ring. In Escherichia coli O157:H7, this protein is Cell division protein FtsA.